A 434-amino-acid polypeptide reads, in one-letter code: Enolase (434 aa).

Position 163 (Q163) interacts with (2R)-2-phosphoglycerate. E205 (proton donor) is an active-site residue. Residues D242, E291, and D318 each contribute to the Mg(2+) site. (2R)-2-phosphoglycerate is bound by residues K343, R372, S373, and K394. K343 (proton acceptor) is an active-site residue.

Belongs to the enolase family. It depends on Mg(2+) as a cofactor.

It localises to the cytoplasm. Its subcellular location is the secreted. The protein localises to the cell surface. The enzyme catalyses (2R)-2-phosphoglycerate = phosphoenolpyruvate + H2O. It functions in the pathway carbohydrate degradation; glycolysis; pyruvate from D-glyceraldehyde 3-phosphate: step 4/5. Catalyzes the reversible conversion of 2-phosphoglycerate (2-PG) into phosphoenolpyruvate (PEP). It is essential for the degradation of carbohydrates via glycolysis. The polypeptide is Enolase (Streptococcus gordonii (strain Challis / ATCC 35105 / BCRC 15272 / CH1 / DL1 / V288)).